A 301-amino-acid chain; its full sequence is Glycine--tRNA ligase alpha subunit (301 aa).

It belongs to the class-II aminoacyl-tRNA synthetase family. In terms of assembly, tetramer of two alpha and two beta subunits.

It localises to the cytoplasm. The enzyme catalyses tRNA(Gly) + glycine + ATP = glycyl-tRNA(Gly) + AMP + diphosphate. The sequence is that of Glycine--tRNA ligase alpha subunit from Shewanella piezotolerans (strain WP3 / JCM 13877).